Reading from the N-terminus, the 1447-residue chain is Bud site selection protein 4 (1447 aa).

Residues 1–16 are compositionally biased toward basic and acidic residues; that stretch reads MHDAESTVDSLLKEID. Disordered regions lie at residues 1-37 and 57-76; these read MHDAESTVDSLLKEIDNEMEQTKSNITQNGSEDTPHN and NTRSNATENSRGRSPSKMST. The residue at position 10 (Ser10) is a Phosphoserine. 2 stretches are compositionally biased toward polar residues: residues 22–32 and 59–76; these read TKSNITQNGSE and RSNATENSRGRSPSKMST. Phosphoserine is present on residues Ser78, Ser81, Ser91, Ser96, and Ser167. The interval 272 to 316 is disordered; the sequence is NLPSKLLNTSNNSHSDSRSPTASVEDLNISTNLPGADSSQNNPVT. Positions 277–316 are enriched in polar residues; sequence LLNTSNNSHSDSRSPTASVEDLNISTNLPGADSSQNNPVT. Residue Thr365 is modified to Phosphothreonine. Phosphoserine is present on Ser367. The tract at residues 444–588 is disordered; it reads HQESEHANEQ…VEENEESEHV (145 aa). Residues 475 to 494 are compositionally biased toward basic and acidic residues; that stretch reads EFQRNSKDGEEYRIVQHEES. The span at 497–509 shows a compositional bias: polar residues; sequence GQRTKSSEENIIN. Ser511 bears the Phosphoserine mark. Over residues 538-548 the composition is skewed to polar residues; the sequence is SSSCEDQSVSE. Residues 549–580 show a composition bias toward basic and acidic residues; the sequence is ARNKDSIEEKEVETKDENIETEKDESEYHKVE. Position 616 is a phosphoserine (Ser616). A compositionally biased stretch (polar residues) spans 649–664; sequence NSQFSQQSSITTASTV. Residues 649-672 are disordered; the sequence is NSQFSQQSSITTASTVDSKKDNGS. The interaction with IQG1 stretch occupies residues 768 to 879; sequence EHENIPLSTH…SLWESSYELK (112 aa). Ser805 and Ser811 each carry phosphoserine. The PH domain occupies 1302–1413; sequence NIYKEGYLLQ…WYNKLQEVVE (112 aa).

This sequence belongs to the BUD4 family. Interacts with AXL1, IQG1 and SEC3. Post-translationally, phosphorylated by CDC28.

It localises to the bud neck. Its function is as follows. Required for establishment of the axial budding pattern in haploid cells. Cooperates with other bud site selection proteins to recognize a spatial landmark during mitosis and they subsequently become a landmark for downstream polarity establishment factors that coordinate axial budding and cytokinesis. Involved in the septin organization at the bud neck. The protein is Bud site selection protein 4 (BUD4) of Saccharomyces cerevisiae (strain YJM789) (Baker's yeast).